Reading from the N-terminus, the 475-residue chain is Aspartyl/glutamyl-tRNA(Asn/Gln) amidotransferase subunit B (475 aa).

This sequence belongs to the GatB/GatE family. GatB subfamily. As to quaternary structure, heterotrimer of A, B and C subunits.

It carries out the reaction L-glutamyl-tRNA(Gln) + L-glutamine + ATP + H2O = L-glutaminyl-tRNA(Gln) + L-glutamate + ADP + phosphate + H(+). The enzyme catalyses L-aspartyl-tRNA(Asn) + L-glutamine + ATP + H2O = L-asparaginyl-tRNA(Asn) + L-glutamate + ADP + phosphate + 2 H(+). In terms of biological role, allows the formation of correctly charged Asn-tRNA(Asn) or Gln-tRNA(Gln) through the transamidation of misacylated Asp-tRNA(Asn) or Glu-tRNA(Gln) in organisms which lack either or both of asparaginyl-tRNA or glutaminyl-tRNA synthetases. The reaction takes place in the presence of glutamine and ATP through an activated phospho-Asp-tRNA(Asn) or phospho-Glu-tRNA(Gln). In Thermoanaerobacter pseudethanolicus (strain ATCC 33223 / 39E) (Clostridium thermohydrosulfuricum), this protein is Aspartyl/glutamyl-tRNA(Asn/Gln) amidotransferase subunit B.